Reading from the N-terminus, the 209-residue chain is Guanylate kinase (209 aa).

Residues 7–185 (GNLYIVAAPS…AAMELQSIVI (179 aa)) enclose the Guanylate kinase-like domain. 14–21 (APSGGGKT) contributes to the ATP binding site.

The protein belongs to the guanylate kinase family.

The protein resides in the cytoplasm. It catalyses the reaction GMP + ATP = GDP + ADP. Functionally, essential for recycling GMP and indirectly, cGMP. This Legionella pneumophila (strain Paris) protein is Guanylate kinase.